A 264-amino-acid polypeptide reads, in one-letter code: Glucosamine-6-phosphate deaminase (264 aa).

The active-site Proton acceptor; for enolization step is the Asp-67. The active-site For ring-opening step is Asn-136. The active-site Proton acceptor; for ring-opening step is His-138. Residue Glu-143 is the For ring-opening step of the active site.

It belongs to the glucosamine/galactosamine-6-phosphate isomerase family. NagB subfamily. Homohexamer.

The catalysed reaction is alpha-D-glucosamine 6-phosphate + H2O = beta-D-fructose 6-phosphate + NH4(+). It functions in the pathway amino-sugar metabolism; N-acetylneuraminate degradation; D-fructose 6-phosphate from N-acetylneuraminate: step 5/5. In terms of biological role, catalyzes the reversible isomerization-deamination of glucosamine 6-phosphate (GlcN6P) to form fructose 6-phosphate (Fru6P) and ammonium ion. The sequence is that of Glucosamine-6-phosphate deaminase from Shewanella woodyi (strain ATCC 51908 / MS32).